We begin with the raw amino-acid sequence, 146 residues long: Acidic phospholipase A2 2 (146 aa).

Residues 1–21 (MTPAHLLILAAVCVSPLGASS) form the signal peptide. Positions 22 to 27 (SRPMPL) are excised as a propeptide. Disulfide bonds link cysteine 38-cysteine 98, cysteine 53-cysteine 145, cysteine 55-cysteine 71, cysteine 70-cysteine 126, cysteine 77-cysteine 119, cysteine 87-cysteine 112, and cysteine 105-cysteine 117. 3 residues coordinate Ca(2+): tyrosine 54, glycine 56, and glycine 58. Histidine 74 is a catalytic residue. Aspartate 75 serves as a coordination point for Ca(2+). Aspartate 120 is a catalytic residue.

It belongs to the phospholipase A2 family. Group I subfamily. D49 sub-subfamily. The cofactor is Ca(2+). In terms of tissue distribution, expressed by the venom gland.

It localises to the secreted. The enzyme catalyses a 1,2-diacyl-sn-glycero-3-phosphocholine + H2O = a 1-acyl-sn-glycero-3-phosphocholine + a fatty acid + H(+). Its function is as follows. PLA2 catalyzes the calcium-dependent hydrolysis of the 2-acyl groups in 3-sn-phosphoglycerides. The polypeptide is Acidic phospholipase A2 2 (Naja atra (Chinese cobra)).